Reading from the N-terminus, the 476-residue chain is ATP synthase subunit beta (476 aa).

157–164 is a binding site for ATP; it reads GGAGVGKT.

The protein belongs to the ATPase alpha/beta chains family. As to quaternary structure, F-type ATPases have 2 components, CF(1) - the catalytic core - and CF(0) - the membrane proton channel. CF(1) has five subunits: alpha(3), beta(3), gamma(1), delta(1), epsilon(1). CF(0) has three main subunits: a(1), b(2) and c(9-12). The alpha and beta chains form an alternating ring which encloses part of the gamma chain. CF(1) is attached to CF(0) by a central stalk formed by the gamma and epsilon chains, while a peripheral stalk is formed by the delta and b chains.

The protein localises to the cell membrane. The catalysed reaction is ATP + H2O + 4 H(+)(in) = ADP + phosphate + 5 H(+)(out). Functionally, produces ATP from ADP in the presence of a proton gradient across the membrane. The catalytic sites are hosted primarily by the beta subunits. This chain is ATP synthase subunit beta, found in Mycoplasma genitalium (strain ATCC 33530 / DSM 19775 / NCTC 10195 / G37) (Mycoplasmoides genitalium).